The sequence spans 533 residues: Aspartic proteinase sxa1 (533 aa).

The signal sequence occupies residues 1-23 (MKASFFVFAISALQALQASVASA). The region spanning 76–434 (YFANLTLGSN…DWDAQKIGLA (359 aa)) is the Peptidase A1 domain. Residue asparagine 79 is glycosylated (N-linked (GlcNAc...) asparagine). The active site involves aspartate 94. Asparagine 106, asparagine 138, asparagine 153, asparagine 166, asparagine 271, asparagine 278, asparagine 299, and asparagine 319 each carry an N-linked (GlcNAc...) asparagine glycan. Aspartate 325 is a catalytic residue. The N-linked (GlcNAc...) asparagine glycan is linked to asparagine 439.

This sequence belongs to the peptidase A1 family.

Its function is as follows. Involved in degradation or processing of the mating pheromones. Its loss may cause a persistent response to the pheromones. It may cleave the mating pheromone M-factor. May be involved in processing of zymogens that are required for zygote formation. This Schizosaccharomyces pombe (strain 972 / ATCC 24843) (Fission yeast) protein is Aspartic proteinase sxa1 (sxa1).